A 338-amino-acid chain; its full sequence is Phenylalanine--tRNA ligase alpha subunit (338 aa).

Glutamate 253 is a Mg(2+) binding site.

It belongs to the class-II aminoacyl-tRNA synthetase family. Phe-tRNA synthetase alpha subunit type 1 subfamily. In terms of assembly, tetramer of two alpha and two beta subunits. Mg(2+) is required as a cofactor.

It localises to the cytoplasm. It catalyses the reaction tRNA(Phe) + L-phenylalanine + ATP = L-phenylalanyl-tRNA(Phe) + AMP + diphosphate + H(+). The polypeptide is Phenylalanine--tRNA ligase alpha subunit (Syntrophus aciditrophicus (strain SB)).